The sequence spans 163 residues: MRHNKKFNHLGRTASHRSAMLSNMACSLIKHKRITTTVAKAKALKKFVEPLITKSKEDTTNSRRVVFSNLQDKIAVTELFKEISVKIADRPGGYTRIIKTGNRLGDNAEMCFIELVDYNENMAKEKVAKKATRTRRSKKSAEAAAPAAVEAPATEEPKAESAE.

The interval 127–163 is disordered; it reads VAKKATRTRRSKKSAEAAAPAAVEAPATEEPKAESAE. The span at 129–138 shows a compositional bias: basic residues; sequence KKATRTRRSK. The segment covering 142 to 154 has biased composition (low complexity); sequence EAAAPAAVEAPAT.

The protein belongs to the bacterial ribosomal protein bL17 family. In terms of assembly, part of the 50S ribosomal subunit. Contacts protein L32.

The protein is Large ribosomal subunit protein bL17 of Bacteroides thetaiotaomicron (strain ATCC 29148 / DSM 2079 / JCM 5827 / CCUG 10774 / NCTC 10582 / VPI-5482 / E50).